The chain runs to 388 residues: Succinate--CoA ligase [ADP-forming] subunit beta (388 aa).

Residues 9–244 (KQLFAEFGLP…PSQEDEREAH (236 aa)) form the ATP-grasp domain. ATP-binding positions include Lys46, 53–55 (GRG), Glu99, Ser102, and Glu107. Residues Asn199 and Asp213 each contribute to the Mg(2+) site. Residues Asn264 and 321-323 (GIV) contribute to the substrate site.

It belongs to the succinate/malate CoA ligase beta subunit family. Heterotetramer of two alpha and two beta subunits. Requires Mg(2+) as cofactor.

It catalyses the reaction succinate + ATP + CoA = succinyl-CoA + ADP + phosphate. It carries out the reaction GTP + succinate + CoA = succinyl-CoA + GDP + phosphate. It functions in the pathway carbohydrate metabolism; tricarboxylic acid cycle; succinate from succinyl-CoA (ligase route): step 1/1. Its function is as follows. Succinyl-CoA synthetase functions in the citric acid cycle (TCA), coupling the hydrolysis of succinyl-CoA to the synthesis of either ATP or GTP and thus represents the only step of substrate-level phosphorylation in the TCA. The beta subunit provides nucleotide specificity of the enzyme and binds the substrate succinate, while the binding sites for coenzyme A and phosphate are found in the alpha subunit. This chain is Succinate--CoA ligase [ADP-forming] subunit beta, found in Vibrio campbellii (strain ATCC BAA-1116).